The primary structure comprises 142 residues: Large ribosomal subunit protein uL13 (142 aa).

The protein belongs to the universal ribosomal protein uL13 family. As to quaternary structure, part of the 50S ribosomal subunit.

In terms of biological role, this protein is one of the early assembly proteins of the 50S ribosomal subunit, although it is not seen to bind rRNA by itself. It is important during the early stages of 50S assembly. The sequence is that of Large ribosomal subunit protein uL13 from Vesicomyosocius okutanii subsp. Calyptogena okutanii (strain HA).